Reading from the N-terminus, the 428-residue chain is Keratin, type I cytoskeletal 18-A (428 aa).

A head region spans residues 2-78 (SSSRSVYSSS…NVNLFGGVQN (77 aa)). The disordered stretch occupies residues 24–45 (SAPRFTPGSSAASVHAGAGGSG). The tract at residues 79-114 (EKETMQDLNDRLASYLERVRSLESANKKLEVQIRQH) is coil 1A. Positions 79 to 389 (EKETMQDLND…RLLEGDSFDL (311 aa)) constitute an IF rod domain. Residues 115–130 (TEKKGPAKDWSPYYMT) are linker 1. A coil 1B region spans residues 131–222 (IEDLKKQVFN…KNHQDDVNEL (92 aa)). Residues 223–246 (QAQIASSAVTVEVDAPKSQDLGKI) are linker 12. Residues 247–384 (MADLRAQYDE…IQTYRRLLEG (138 aa)) are coil 2. The tail stretch occupies residues 385–428 (DSFDLQDAVPVVTTQTVKKVITTTQRLVDGKVVAESNNTEVIKS).

Belongs to the intermediate filament family. Heterotetramer of two type I and two type II keratins. Keratin-18 associates with keratin-8. Post-translationally, proteolytically cleaved by caspases during epithelial cell apoptosis. As to expression, expressed at high levels in notochord and low levels in adult liver.

Functionally, when phosphorylated, plays a role in filament reorganization. The polypeptide is Keratin, type I cytoskeletal 18-A (krt18-a) (Xenopus laevis (African clawed frog)).